We begin with the raw amino-acid sequence, 860 residues long: Leucine--tRNA ligase (860 aa).

Positions 42–52 match the 'HIGH' region motif; sequence PYPSGRLHMGH. Positions 619-623 match the 'KMSKS' region motif; it reads KMSKS. Lysine 622 provides a ligand contact to ATP.

It belongs to the class-I aminoacyl-tRNA synthetase family.

Its subcellular location is the cytoplasm. The catalysed reaction is tRNA(Leu) + L-leucine + ATP = L-leucyl-tRNA(Leu) + AMP + diphosphate. In Escherichia coli O127:H6 (strain E2348/69 / EPEC), this protein is Leucine--tRNA ligase.